A 361-amino-acid polypeptide reads, in one-letter code: tRNA/tmRNA (uracil-C(5))-methyltransferase (361 aa).

Residues Gln-185, Tyr-213, Asn-218, Glu-234, and Asp-294 each coordinate S-adenosyl-L-methionine. Cys-319 functions as the Nucleophile in the catalytic mechanism. Residue Glu-353 is the Proton acceptor of the active site.

It belongs to the class I-like SAM-binding methyltransferase superfamily. RNA M5U methyltransferase family. TrmA subfamily.

The catalysed reaction is uridine(54) in tRNA + S-adenosyl-L-methionine = 5-methyluridine(54) in tRNA + S-adenosyl-L-homocysteine + H(+). The enzyme catalyses uridine(341) in tmRNA + S-adenosyl-L-methionine = 5-methyluridine(341) in tmRNA + S-adenosyl-L-homocysteine + H(+). In terms of biological role, dual-specificity methyltransferase that catalyzes the formation of 5-methyluridine at position 54 (m5U54) in all tRNAs, and that of position 341 (m5U341) in tmRNA (transfer-mRNA). The sequence is that of tRNA/tmRNA (uracil-C(5))-methyltransferase from Pseudomonas putida (strain ATCC 700007 / DSM 6899 / JCM 31910 / BCRC 17059 / LMG 24140 / F1).